Consider the following 541-residue polypeptide: Tripeptidyl aminopeptidase (541 aa).

The first 36 residues, 1–36 (MRKSSIRRRATAFGTAGALVTATLIAGAVSAPAASA), serve as a signal peptide directing secretion. Positions 37–39 (APA) are excised as a propeptide. One can recognise an AB hydrolase-1 domain in the interval 123-501 (GALIYNPGGP…SRLITERDAG (379 aa)). Residue Ser249 is the Nucleophile of the active site. Asp474 is an active-site residue. His503 serves as the catalytic Proton donor.

It belongs to the peptidase S33 family.

It is found in the secreted. Functionally, cleaves tripeptides from the N-termini of proteins. Does not cleave mono- or dipeptides, or N-terminally blocked peptides. The protein is Tripeptidyl aminopeptidase of Streptomyces coelicolor (strain ATCC BAA-471 / A3(2) / M145).